A 276-amino-acid polypeptide reads, in one-letter code: MSLWFLVFLSVLQGVTELFPVSSLGHTLLVPALFGMHIDKHAPQLLPFLVALHLGTALALLWYFRERWIALIAGFFASLNGRKNDEGHLMWALIIGTIPTGLVGLLLEKRIERVFHDLRIVAAALIINGVLLWLGDRIQRARAHRPPEKLTFKQAFFVGLAQVGALIPGFSRSGLTMIAGNAAGLTADKAAEFSFLLGTPIIFAAGLLELPKLFHAPDQLADALLGGVLTAIAAYLSVRFLMRYFEGRGRLASFGLYCVLAGLFCLGWFMFHAQPV.

A run of 8 helical transmembrane segments spans residues Met-1 to Val-21, Gln-44 to Phe-64, Gly-87 to Leu-107, Val-114 to Leu-134, Leu-150 to Phe-170, Ala-190 to Leu-210, Asp-222 to Met-242, and Leu-251 to Phe-271.

The protein belongs to the UppP family.

The protein localises to the cell inner membrane. It catalyses the reaction di-trans,octa-cis-undecaprenyl diphosphate + H2O = di-trans,octa-cis-undecaprenyl phosphate + phosphate + H(+). In terms of biological role, catalyzes the dephosphorylation of undecaprenyl diphosphate (UPP). Confers resistance to bacitracin. The chain is Undecaprenyl-diphosphatase 1 from Burkholderia pseudomallei (strain 1106a).